Consider the following 451-residue polypeptide: MNTNNILETIKMIEEEKLDVRTITMGISLLDCIDPDGDKARIKIYDKITKSAEHLVEVGRQIETEFGIPIVNKRVSITPMSIIAGATNETSYVEFARTLDRAAETLGIDFLGGFSALVQKGCTKGDKILISSIPEALAVTKKVCASVNVGCTKSGINMNAVRDMADVIKRTAELTKDQKGFGCAKLVVFANAVEDNPFMAGAFHGVGEAERIINVGVSGPGVVKRALEKVRGASFDVVAETIKQTAFKVTRMGELVANEASRRLDVPFGIVDLSLAPTPAVGDSVAEILEEIGLEQVGTHGTIAALAMLNDAVKKGGVMACSHVGGLSGAFIPVSEDAGMIDAVISGSLNLEKLEGMTCVCSVGLDMIAIPGDTPASTIAGMIADEAAIGVINNKTTAVRIIPAPGCEIGDMVEFGGLLGRAPVMKVNGKSSELFAQRGGRIPAPIHSFKN.

Belongs to the UPF0210 family. Homodimer.

The protein is UPF0210 protein Cbei_2352 of Clostridium beijerinckii (strain ATCC 51743 / NCIMB 8052) (Clostridium acetobutylicum).